We begin with the raw amino-acid sequence, 566 residues long: Type 3 secretion system secretin (566 aa).

Residues 1–22 (MKKFNIKSLTLLIVLLPLIVNA) form the signal peptide.

This sequence belongs to the bacterial secretin family. T3SS SctC subfamily. In terms of assembly, the core secretion machinery of the T3SS is composed of approximately 20 different proteins, including cytoplasmic components, a base, an export apparatus and a needle. This subunit is part of the base, which anchors the injectisome in the bacterial cell envelope. Forms a stable homooligomeric complex.

It is found in the cell outer membrane. Its function is as follows. Component of the type III secretion system (T3SS), also called injectisome, which is used to inject bacterial effector proteins into eukaryotic host cells. Forms a ring-shaped multimeric structure with an apparent central pore in the outer membrane. The chain is Type 3 secretion system secretin from Shigella sonnei.